The primary structure comprises 1829 residues: Protein TIC 214 (1829 aa).

Transmembrane regions (helical) follow at residues isoleucine 18–glycine 38, phenylalanine 67–leucine 87, proline 90–proline 110, leucine 127–leucine 147, phenylalanine 174–tryptophan 194, and isoleucine 224–isoleucine 244. The span at arginine 260 to glycine 272 shows a compositional bias: basic and acidic residues. The disordered stretch occupies residues arginine 260–glutamate 301.

This sequence belongs to the TIC214 family. In terms of assembly, part of the Tic complex.

Its subcellular location is the plastid. The protein localises to the chloroplast inner membrane. Its function is as follows. Involved in protein precursor import into chloroplasts. May be part of an intermediate translocation complex acting as a protein-conducting channel at the inner envelope. This Citrus sinensis (Sweet orange) protein is Protein TIC 214.